The primary structure comprises 144 residues: Acidic phospholipase A2 (144 aa).

Positions 1-19 are cleaved as a signal peptide; that stretch reads MYPAHLLVLLAVCVSLLGA. Positions 20–27 are excised as a propeptide; it reads SDIPPLPL. Cystine bridges form between Cys38-Cys98, Cys54-Cys143, Cys56-Cys72, Cys71-Cys125, Cys78-Cys118, Cys87-Cys111, and Cys105-Cys116. Ca(2+) contacts are provided by Tyr55, Gly57, and Gly59. His75 is an active-site residue. Position 76 (Asp76) interacts with Ca(2+). Residue Asp119 is part of the active site.

Belongs to the phospholipase A2 family. Group I subfamily. D49 sub-subfamily. Requires Ca(2+) as cofactor. As to expression, expressed by the venom gland.

It localises to the secreted. The catalysed reaction is a 1,2-diacyl-sn-glycero-3-phosphocholine + H2O = a 1-acyl-sn-glycero-3-phosphocholine + a fatty acid + H(+). PLA2 catalyzes the calcium-dependent hydrolysis of the 2-acyl groups in 3-sn-phosphoglycerides. This chain is Acidic phospholipase A2, found in Aipysurus laevis (Olive sea snake).